We begin with the raw amino-acid sequence, 292 residues long: Elongation factor Ts (292 aa).

The involved in Mg(2+) ion dislocation from EF-Tu stretch occupies residues 79-82 (TDFV).

The protein belongs to the EF-Ts family.

It localises to the cytoplasm. In terms of biological role, associates with the EF-Tu.GDP complex and induces the exchange of GDP to GTP. It remains bound to the aminoacyl-tRNA.EF-Tu.GTP complex up to the GTP hydrolysis stage on the ribosome. This Idiomarina loihiensis (strain ATCC BAA-735 / DSM 15497 / L2-TR) protein is Elongation factor Ts (tsf).